Here is a 463-residue protein sequence, read N- to C-terminus: Hexose-6-phosphate:phosphate antiporter (463 aa).

Topologically, residues 1-24 are cytoplasmic; it reads MLAFLNQVRKPTLDLPLEVRRKMW. A helical membrane pass occupies residues 25–45; it reads FKPFMQSYLVVFIGYLTMYLI. The Periplasmic segment spans residues 46–60; the sequence is RKNFNIAQNDMISTY. The chain crosses the membrane as a helical span at residues 61 to 81; it reads GLSMTQLGMIGLGFSITYGVG. Over 82 to 96 the chain is Cytoplasmic; the sequence is KTLVSYYADGKNTKQ. A helical transmembrane segment spans residues 97–117; that stretch reads FLPFMLILSAICMLGFSASMG. Over 118-120 the chain is Periplasmic; the sequence is SGS. A helical transmembrane segment spans residues 121 to 141; it reads VSLFLMIAFYALSGFFQSTGG. The Cytoplasmic portion of the chain corresponds to 142–159; sequence SCSYSTITKWTPRRKRGT. A helical transmembrane segment spans residues 160-180; it reads FLGFWNISHNLGGAGAAGVAL. The Periplasmic portion of the chain corresponds to 181 to 189; that stretch reads FGANYLFDG. A helical transmembrane segment spans residues 190 to 210; that stretch reads HVIGMFIFPSIIALIVGFIGL. Topologically, residues 211 to 259 are cytoplasmic; it reads RYGSDSPESYGLGKAEELFGEEISEEDKETESTDMTKWQIFVEYVLKNK. A helical membrane pass occupies residues 260-280; sequence VIWLLCFANIFLYVVRIGIDQ. Residues 281–297 are Periplasmic-facing; sequence WSTVYAFQELKLSKAVA. Residues 298–318 form a helical membrane-spanning segment; it reads IQGFTLFEAGALVGTLLWGWL. Residues 319-326 lie on the Cytoplasmic side of the membrane; that stretch reads SDLANGRR. The chain crosses the membrane as a helical span at residues 327–347; the sequence is GLVACIALALIIATLGVYQHA. The Periplasmic portion of the chain corresponds to 348-357; sequence SNEYIYLASL. A helical membrane pass occupies residues 358 to 378; the sequence is FALGFLVFGPQLLIGVAAVGF. Residues 379–382 are Cytoplasmic-facing; that stretch reads VPKK. The chain crosses the membrane as a helical span at residues 383-403; the sequence is AIGAADGIKGTFAYLIGDSFA. The Periplasmic portion of the chain corresponds to 404-425; the sequence is KLGLGMIADGTPVFGLTGWAGT. Residues 426-446 traverse the membrane as a helical segment; sequence FAALDIAAIGCICLMAIVAVM. Topologically, residues 447–463 are cytoplasmic; that stretch reads EERKIRREKKIQQLTVA.

The protein belongs to the major facilitator superfamily. Organophosphate:Pi antiporter (OPA) (TC 2.A.1.4) family.

The protein localises to the cell inner membrane. Mediates the exchange of external hexose 6-phosphate and internal inorganic phosphate. In Escherichia coli O157:H7, this protein is Hexose-6-phosphate:phosphate antiporter (uhpT).